Consider the following 207-residue polypeptide: 3-isopropylmalate dehydratase small subunit (207 aa).

It belongs to the LeuD family. LeuD type 1 subfamily. Heterodimer of LeuC and LeuD.

The catalysed reaction is (2R,3S)-3-isopropylmalate = (2S)-2-isopropylmalate. It functions in the pathway amino-acid biosynthesis; L-leucine biosynthesis; L-leucine from 3-methyl-2-oxobutanoate: step 2/4. Functionally, catalyzes the isomerization between 2-isopropylmalate and 3-isopropylmalate, via the formation of 2-isopropylmaleate. This is 3-isopropylmalate dehydratase small subunit from Gluconacetobacter diazotrophicus (strain ATCC 49037 / DSM 5601 / CCUG 37298 / CIP 103539 / LMG 7603 / PAl5).